The chain runs to 561 residues: MNINVADLLNGNYILLLFVVLALGLCLGKLRLGSVQLGNSIGVLVVSLLLGQQHFSINTDALNLGFMLFIFCVGVEAGPNFFSIFFRDGKNYLMLALVMVGSALLIALGLGKLFGWDIGLTAGMLAGSMTSTPVLVGAGDTLRHSGMESSQLSVALDNLSLGYALTYLIGLVSLIVGARYLPKLQHQDLQTSAQQIARERGLDTDANRKVYLPVIRAYRVGPELVAWADGKNLRELGIYRQTGCYIERIRRNGILANPDGDAVLQMGDEIALVGYPDAHARLDPSFRNGKEVFDRDLLDMRIVTEEIVVKNHNAVGRRLAQLKLTDHGCFLNRVIRSQIEMPIDDNVVLNKGDVLQVSGDARRVKTVADRIGFISIHSQVTDLLAFCAFFIIGLMIGMITFQFSNFSFGIGNAAGLLFAGIMLGFLRANHPTFGYIPQGALNMVKEFGLMVFMAGVGLSAGSGIGNGLGAVGGQMLIAGLVVSLVPVIICFLFGAYVLRMNRALLFGAMMGARTCAPAMEIISDTARSNIPALGYAGTYAIANVLLTLAGTLIVIIWPGLG.

Helical transmembrane passes span 8 to 28, 32 to 52, 66 to 86, 94 to 114, and 158 to 178; these read LLNGNYILLLFVVLALGLCLG, LGSVQLGNSIGVLVVSLLLGQ, FMLFIFCVGVEAGPNFFSIFF, MLALVMVGSALLIALGLGKLF, and NLSLGYALTYLIGLVSLIVGA. 2 consecutive RCK C-terminal domains span residues 200-288 and 292-373; these read RGLD…SFRN and VFDR…RIGF. 5 helical membrane passes run 383-403, 406-426, 447-467, 475-495, and 540-560; these read LLAFCAFFIIGLMIGMITFQF, FSFGIGNAAGLLFAGIMLGFL, FGLMVFMAGVGLSAGSGIGNG, MLIAGLVVSLVPVIICFLFGA, and AIANVLLTLAGTLIVIIWPGL.

It belongs to the AAE transporter (TC 2.A.81) family. YbjL subfamily.

The protein resides in the cell membrane. This is Putative transport protein CKO_02260 from Citrobacter koseri (strain ATCC BAA-895 / CDC 4225-83 / SGSC4696).